Reading from the N-terminus, the 388-residue chain is Chorismate synthase (388 aa).

Arginine 39 and arginine 45 together coordinate NADP(+). FMN is bound by residues arginine 132–serine 134, asparagine 251–alanine 252, glycine 296, lysine 311–threonine 315, and arginine 337.

It belongs to the chorismate synthase family. In terms of assembly, homotetramer. The cofactor is FMNH2.

It catalyses the reaction 5-O-(1-carboxyvinyl)-3-phosphoshikimate = chorismate + phosphate. It functions in the pathway metabolic intermediate biosynthesis; chorismate biosynthesis; chorismate from D-erythrose 4-phosphate and phosphoenolpyruvate: step 7/7. Catalyzes the anti-1,4-elimination of the C-3 phosphate and the C-6 proR hydrogen from 5-enolpyruvylshikimate-3-phosphate (EPSP) to yield chorismate, which is the branch point compound that serves as the starting substrate for the three terminal pathways of aromatic amino acid biosynthesis. This reaction introduces a second double bond into the aromatic ring system. The polypeptide is Chorismate synthase (Staphylococcus carnosus (strain TM300)).